The chain runs to 355 residues: Serum paraoxonase/arylesterase 1 (355 aa).

Cysteines 42 and 353 form a disulfide. Residues Glu-53 and Asp-54 each coordinate Ca(2+). The active-site Proton acceptor is the His-115. The Ca(2+) site is built by Ile-117, Asn-168, Asp-169, and Asn-224. N-linked (GlcNAc...) asparagine glycosylation occurs at Asn-253. Residues Asp-269 and Asn-270 each contribute to the Ca(2+) site. 2 N-linked (GlcNAc...) asparagine glycosylation sites follow: Asn-270 and Asn-324.

This sequence belongs to the paraoxonase family. Homodimer. Interacts with CLU. The cofactor is Ca(2+). Post-translationally, the signal sequence is not cleaved. In terms of tissue distribution, plasma, liver, kidney, heart, brain, small intestine and lung. In the plasma, associated with HDL.

The protein localises to the secreted. It is found in the extracellular space. The enzyme catalyses a phenyl acetate + H2O = a phenol + acetate + H(+). It carries out the reaction An aryl dialkyl phosphate + H2O = dialkyl phosphate + an aryl alcohol.. The catalysed reaction is an N-acyl-L-homoserine lactone + H2O = an N-acyl-L-homoserine + H(+). In terms of biological role, hydrolyzes the toxic metabolites of a variety of organophosphorus insecticides. Capable of hydrolyzing a broad spectrum of organophosphate substrates and lactones, and a number of aromatic carboxylic acid esters. Mediates an enzymatic protection of low density lipoproteins against oxidative modification. This chain is Serum paraoxonase/arylesterase 1 (Pon1), found in Mus musculus (Mouse).